The chain runs to 641 residues: Chaperone protein DnaK (641 aa).

T199 is subject to Phosphothreonine; by autocatalysis. The disordered stretch occupies residues 603–627; that stretch reads YGQQQAEGGAQAAGAAGGSSKADDA. Over residues 604–616 the composition is skewed to low complexity; that stretch reads GQQQAEGGAQAAG.

It belongs to the heat shock protein 70 family.

Functionally, acts as a chaperone. This Azoarcus sp. (strain BH72) protein is Chaperone protein DnaK.